Consider the following 579-residue polypeptide: Kelch repeat and BTB domain-containing protein F47D12.7 (579 aa).

Residues 51-119 (PTVTLVLRNN…PKAFEQGIKP (69 aa)) enclose the BTB domain. Kelch repeat units follow at residues 266–316 (AIVC…VVED), 317–363 (KLIV…RVND), 369–415 (LVFA…TIDN), 417–463 (IVAI…SIMN), 465–511 (VCMI…QMDT), and 513–559 (YVYV…TLSD).

This chain is Kelch repeat and BTB domain-containing protein F47D12.7, found in Caenorhabditis elegans.